Consider the following 417-residue polypeptide: Snake venom metalloproteinase aculysin-1 (417 aa).

An N-terminal signal peptide occupies residues 1–20 (MIQVLLVTICLAAFPYQGSS). Residues 21 to 189 (IMLESGKVND…KKPSWLNLTP (169 aa)) constitute a propeptide that is removed on maturation. Residues 197-392 (TSVNLQLIVD…KKPKCIHKKS (196 aa)) form the Peptidase M12B domain. Intrachain disulfides connect Cys308-Cys387, Cys349-Cys371, and Cys351-Cys354. Zn(2+) is bound at residue His333. Glu334 is a catalytic residue. 2 residues coordinate Zn(2+): His337 and His343. Residues 393–417 (LKTDTVSTSVSGNEPLDDNVDGFHA) constitute a propeptide that is removed on maturation. Residues 398 to 417 (VSTSVSGNEPLDDNVDGFHA) are disordered. Residues 407–417 (PLDDNVDGFHA) are compositionally biased toward acidic residues.

The protein belongs to the venom metalloproteinase (M12B) family. P-I subfamily. In terms of assembly, monomer. Requires Zn(2+) as cofactor. As to expression, expressed by the venom gland.

The protein localises to the secreted. Its function is as follows. This protein is an alkaline zinc metalloprotease from snake venom that possesses weak hemorrhagic activity. This Deinagkistrodon acutus (Hundred-pace snake) protein is Snake venom metalloproteinase aculysin-1.